A 569-amino-acid polypeptide reads, in one-letter code: ATP-dependent RNA helicase HAS1 (569 aa).

Disordered regions lie at residues methionine 1–phenylalanine 57 and phenylalanine 71–leucine 110. Residues glutamate 34–aspartate 45 are compositionally biased toward acidic residues. Residues phenylalanine 71–threonine 85 show a composition bias toward basic and acidic residues. A Q motif motif is present at residues aspartate 105 to glutamate 133. Positions isoleucine 136 to tyrosine 312 constitute a Helicase ATP-binding domain. Alanine 149–threonine 156 contacts ATP. The DEAD box signature appears at aspartate 259 to aspartate 262. The region spanning glycine 326–isoleucine 496 is the Helicase C-terminal domain.

This sequence belongs to the DEAD box helicase family. DDX18/HAS1 subfamily. Associates in the nucleolus with the 60S and pre-60S ribosomal subunits.

The protein localises to the nucleus. Its subcellular location is the nucleolus. It carries out the reaction ATP + H2O = ADP + phosphate + H(+). Its function is as follows. ATP-dependent RNA helicase involved in 40S ribosomal subunit biogenesis. Required for the processing and cleavage of 35S pre-rRNA at sites A0, A1, and A2, leading to mature 18S rRNA. This is ATP-dependent RNA helicase HAS1 (HAS1) from Meyerozyma guilliermondii (strain ATCC 6260 / CBS 566 / DSM 6381 / JCM 1539 / NBRC 10279 / NRRL Y-324) (Yeast).